A 308-amino-acid polypeptide reads, in one-letter code: 1-acyl-sn-glycerol-3-phosphate acyltransferase (308 aa).

3 helical membrane passes run 65 to 85 (FLSMMVTTIVWNMIMLILLPW), 124 to 144 (AIYICNHASLVDIFLIMWLIP), and 148 to 168 (VTIAKKEIIWYPLFGQLYVLA). The HXXXXD motif signature appears at 130–135 (HASLVD).

It belongs to the 1-acyl-sn-glycerol-3-phosphate acyltransferase family.

The protein localises to the membrane. The enzyme catalyses a 1-acyl-sn-glycero-3-phosphate + an acyl-CoA = a 1,2-diacyl-sn-glycero-3-phosphate + CoA. In terms of biological role, converts lysophosphatidic acid (LPA) into phosphatidic acid by incorporating acyl moiety at the 2 position. This enzyme shows a preference for medium-chain-length fatty acyl-coenzyme a substrates. This Cocos nucifera (Coconut palm) protein is 1-acyl-sn-glycerol-3-phosphate acyltransferase.